Reading from the N-terminus, the 203-residue chain is ATP-dependent Clp protease proteolytic subunit 2 (203 aa).

The Nucleophile role is filled by serine 98. Histidine 123 is an active-site residue.

Belongs to the peptidase S14 family. As to quaternary structure, fourteen ClpP subunits assemble into 2 heptameric rings which stack back to back to give a disk-like structure with a central cavity, resembling the structure of eukaryotic proteasomes.

It localises to the cytoplasm. The catalysed reaction is Hydrolysis of proteins to small peptides in the presence of ATP and magnesium. alpha-casein is the usual test substrate. In the absence of ATP, only oligopeptides shorter than five residues are hydrolyzed (such as succinyl-Leu-Tyr-|-NHMec, and Leu-Tyr-Leu-|-Tyr-Trp, in which cleavage of the -Tyr-|-Leu- and -Tyr-|-Trp bonds also occurs).. Cleaves peptides in various proteins in a process that requires ATP hydrolysis. Has a chymotrypsin-like activity. Plays a major role in the degradation of misfolded proteins. This chain is ATP-dependent Clp protease proteolytic subunit 2, found in Chlamydia pneumoniae (Chlamydophila pneumoniae).